The primary structure comprises 97 residues: MKKRGSRSLAQVIRCKTGKYFPASVESGTKKEKKHHYSTASKEKEVLRKRAAEFDVLVRSLLNKQMPKNPDQILVFTYQKGFVETDLHNFGRYSVKL.

The protein is Late transcription unit B protein (ltuB) of Chlamydia muridarum (strain MoPn / Nigg).